We begin with the raw amino-acid sequence, 104 residues long: Late embryogenis abundant protein 41 (104 aa).

The transit peptide at 1–31 directs the protein to the mitochondrion; sequence MAARSLSGAVKSLCSAASGSLSCSIVLRRSY.

Belongs to the LEA type 3 family.

It is found in the mitochondrion. This chain is Late embryogenis abundant protein 41, found in Arabidopsis thaliana (Mouse-ear cress).